The chain runs to 159 residues: Transcriptional repressor NrdR (159 aa).

The segment at Cys-3–Cys-34 is a zinc-finger region. An ATP-cone domain is found at Leu-49–Glu-139.

It belongs to the NrdR family. The cofactor is Zn(2+).

Its function is as follows. Negatively regulates transcription of bacterial ribonucleotide reductase nrd genes and operons by binding to NrdR-boxes. The sequence is that of Transcriptional repressor NrdR from Streptococcus agalactiae serotype Ia (strain ATCC 27591 / A909 / CDC SS700).